Reading from the N-terminus, the 499-residue chain is Ribose import ATP-binding protein RbsA (499 aa).

ABC transporter domains follow at residues 3-240 (VEMS…VGRE) and 250-494 (LEPG…TGGD). 35 to 42 (GENGAGKS) contributes to the ATP binding site.

This sequence belongs to the ABC transporter superfamily. Ribose importer (TC 3.A.1.2.1) family. As to quaternary structure, the complex is composed of an ATP-binding protein (RbsA), two transmembrane proteins (RbsC) and a solute-binding protein (RbsB).

The protein resides in the cell membrane. The catalysed reaction is D-ribose(out) + ATP + H2O = D-ribose(in) + ADP + phosphate + H(+). Part of the ABC transporter complex RbsABC involved in ribose import. Responsible for energy coupling to the transport system. The chain is Ribose import ATP-binding protein RbsA from Shouchella clausii (strain KSM-K16) (Alkalihalobacillus clausii).